A 183-amino-acid chain; its full sequence is CASP-like protein UU2 (183 aa).

Residues 1-33 (MEESQQQSSKFDAPPSPYVPSRVYLAQIYWKKP) lie on the Cytoplasmic side of the membrane. Residues 34 to 54 (AIVVLRVLQFIFSLIAFSVMA) form a helical membrane-spanning segment. The Extracellular segment spans residues 55–72 (DVLHDVQGSIKSLSYTVA). The chain crosses the membrane as a helical span at residues 73 to 93 (IGVLACAYALAQLSFSLWCVI). Residues 94–118 (RGATSSAGVTPLYQYATFICDQMST) are Cytoplasmic-facing. A helical membrane pass occupies residues 119 to 139 (YFLISAASATATLIDVSGVCG). At 140-156 (SNGSGTNLCSRSTASVT) the chain is on the extracellular side. N141 carries an N-linked (GlcNAc...) asparagine glycan. Residues 157 to 177 (FAFLAFLAFSASSVLTGYYLV) traverse the membrane as a helical segment. At 178–183 (KCILKA) the chain is on the cytoplasmic side.

Belongs to the Casparian strip membrane proteins (CASP) family. Homodimer and heterodimers.

Its subcellular location is the cell membrane. This Selaginella moellendorffii (Spikemoss) protein is CASP-like protein UU2.